Reading from the N-terminus, the 269-residue chain is RBPJ-interacting and tubulin-associated protein 1 (269 aa).

The short motif at 5–17 (VELAVSGIQTLPL) is the Nuclear export signal element. 2 disordered regions span residues 37–101 (SLFG…NKYR) and 141–269 (FWTP…PPWK). Positions 62–77 (RTSGVGTGTSRASGAN) are enriched in polar residues. A compositionally biased stretch (low complexity) spans 79 to 93 (SCETTSSSGSTPTLT). A Nuclear localization signal motif is present at residues 92–108 (LTPRKKNKYRLISHTPS). Residues 128 to 156 (WMAKGDAAKLHSLFWTPPATPRGSHSPRP) are interaction with RBPJ/RBPSUH. The tract at residues 156-269 (PRETPLRAIH…ATQKPKPPWK (114 aa)) is interaction with tubulin.

Belongs to the RITA family. Interacts with RBPJ/RBPSUH.

Its subcellular location is the cytoplasm. The protein resides in the nucleus. It is found in the cytoskeleton. It localises to the microtubule organizing center. The protein localises to the centrosome. Its function is as follows. Tubulin-binding protein that acts as a negative regulator of Notch signaling pathway. Shuttles between the cytoplasm and the nucleus and mediates the nuclear export of RBPJ/RBPSUH, thereby preventing the interaction between RBPJ/RBPSUH and NICD product of Notch proteins (Notch intracellular domain), leading to down-regulate Notch-mediated transcription. May play a role in neurogenesis. The sequence is that of RBPJ-interacting and tubulin-associated protein 1 (RITA1) from Ailuropoda melanoleuca (Giant panda).